Reading from the N-terminus, the 69-residue chain is Cold shock-like protein CspC (69 aa).

Positions 6 to 66 constitute a CSD domain; the sequence is GQVKWFNESK…GQKGPAAVNV (61 aa).

Its subcellular location is the cytoplasm. The chain is Cold shock-like protein CspC (cspC) from Shigella flexneri.